A 256-amino-acid chain; its full sequence is Small ribosomal subunit protein eS1 (256 aa).

A compositionally biased stretch (basic residues) spans 1 to 18; sequence MAVGKNKRLSKGKKGVKK. The tract at residues 1 to 21 is disordered; it reads MAVGKNKRLSKGKKGVKKRTV. An N-acetylalanine; partial modification is found at alanine 2.

The protein belongs to the eukaryotic ribosomal protein eS1 family. Component of the small ribosomal subunit. Mature ribosomes consist of a small (40S) and a large (60S) subunit. The 40S subunit contains about 33 different proteins and 1 molecule of RNA (18S). The 60S subunit contains about 49 different proteins and 3 molecules of RNA (25S, 5.8S and 5S).

It localises to the cytoplasm. The protein is Small ribosomal subunit protein eS1 (rps1) of Neosartorya fischeri (strain ATCC 1020 / DSM 3700 / CBS 544.65 / FGSC A1164 / JCM 1740 / NRRL 181 / WB 181) (Aspergillus fischerianus).